The sequence spans 56 residues: Small ribosomal subunit protein uS14 (56 aa).

Residues C21, C24, C39, and C42 each contribute to the Zn(2+) site.

It belongs to the universal ribosomal protein uS14 family. Zn(2+) serves as cofactor.

The polypeptide is Small ribosomal subunit protein uS14 (RPS29) (Debaryomyces hansenii (strain ATCC 36239 / CBS 767 / BCRC 21394 / JCM 1990 / NBRC 0083 / IGC 2968) (Yeast)).